An 87-amino-acid polypeptide reads, in one-letter code: MGCDDKCGCAVPCPGGTGCRCASSARSGGGDHTTCSCGDHCGCNPCRCGRESQPTGRENRRAGCSCGDSCTCASCGSTTTTAPAATT.

The protein belongs to the metallothionein superfamily. Type 15 family. Expressed in developing seeds.

Metallothioneins have a high content of cysteine residues that bind various heavy metals. This is Class II metallothionein-like protein 1A (MT21A) from Oryza sativa subsp. japonica (Rice).